Reading from the N-terminus, the 207-residue chain is Segregation and condensation protein B (207 aa).

It belongs to the ScpB family. Homodimer. Homodimerization may be required to stabilize the binding of ScpA to the Smc head domains. Component of a cohesin-like complex composed of ScpA, ScpB and the Smc homodimer, in which ScpA and ScpB bind to the head domain of Smc. The presence of the three proteins is required for the association of the complex with DNA.

The protein localises to the cytoplasm. Functionally, participates in chromosomal partition during cell division. May act via the formation of a condensin-like complex containing Smc and ScpA that pull DNA away from mid-cell into both cell halves. This Mycoplasmopsis pulmonis (strain UAB CTIP) (Mycoplasma pulmonis) protein is Segregation and condensation protein B.